Here is a 136-residue protein sequence, read N- to C-terminus: Large ribosomal subunit protein uL16 (136 aa).

This sequence belongs to the universal ribosomal protein uL16 family. In terms of assembly, part of the 50S ribosomal subunit.

In terms of biological role, binds 23S rRNA and is also seen to make contacts with the A and possibly P site tRNAs. The sequence is that of Large ribosomal subunit protein uL16 from Aliivibrio salmonicida (strain LFI1238) (Vibrio salmonicida (strain LFI1238)).